Reading from the N-terminus, the 411-residue chain is Argininosuccinate synthase (411 aa).

ATP-binding positions include 13-21 (AYSGGLDTS) and alanine 40. Residues tyrosine 91 and serine 96 each contribute to the L-citrulline site. Glycine 121 is a binding site for ATP. L-aspartate-binding residues include threonine 123, asparagine 127, and aspartate 128. Residue asparagine 127 coordinates L-citrulline. L-citrulline contacts are provided by arginine 131, serine 182, serine 191, glutamate 267, and tyrosine 279.

It belongs to the argininosuccinate synthase family. Type 1 subfamily. In terms of assembly, homotetramer.

The protein resides in the cytoplasm. It catalyses the reaction L-citrulline + L-aspartate + ATP = 2-(N(omega)-L-arginino)succinate + AMP + diphosphate + H(+). It functions in the pathway amino-acid biosynthesis; L-arginine biosynthesis; L-arginine from L-ornithine and carbamoyl phosphate: step 2/3. The sequence is that of Argininosuccinate synthase from Bartonella tribocorum (strain CIP 105476 / IBS 506).